A 461-amino-acid polypeptide reads, in one-letter code: Hydroxyproline dehydrogenase (461 aa).

K310 carries the post-translational modification N6-acetyllysine.

Belongs to the proline oxidase family. Requires FAD as cofactor.

The catalysed reaction is trans-4-hydroxy-L-proline + a quinone = (3R,5S)-1-pyrroline-3-hydroxy-5-carboxylate + a quinol + H(+). It catalyses the reaction L-proline + a quinone = (S)-1-pyrroline-5-carboxylate + a quinol + H(+). The protein operates within amino-acid degradation; L-proline degradation into L-glutamate; L-glutamate from L-proline: step 1/2. Dehydrogenase that converts trans-4-L-hydroxyproline to delta-1-pyrroline-3-hydroxy-5-carboxylate (Hyp) using ubiquinone-10 as the terminal electron acceptor. Can also use proline as a substrate but with a very much lower efficiency. Does not react with other diastereomers of Hyp: trans-4-D-hydroxyproline and cis-4-L-hydroxyproline. Ubiquininone analogs such as menadione, duroquinone and ubiquinone-1 react more efficiently than oxygen as the terminal electron acceptor during catalysis. The chain is Hydroxyproline dehydrogenase from Bos taurus (Bovine).